A 276-amino-acid polypeptide reads, in one-letter code: Large ribosomal subunit protein uL2 (276 aa).

Positions 28-38 are enriched in basic and acidic residues; it reads RPEKSLTEKLS. 2 disordered regions span residues 28 to 57 and 219 to 276; these read RPEKSLTEKLSKKGGRNNQGRLTVRHQGGG and TVRG…RRKK.

This sequence belongs to the universal ribosomal protein uL2 family. As to quaternary structure, part of the 50S ribosomal subunit. Forms a bridge to the 30S subunit in the 70S ribosome.

One of the primary rRNA binding proteins. Required for association of the 30S and 50S subunits to form the 70S ribosome, for tRNA binding and peptide bond formation. It has been suggested to have peptidyltransferase activity; this is somewhat controversial. Makes several contacts with the 16S rRNA in the 70S ribosome. The sequence is that of Large ribosomal subunit protein uL2 from Exiguobacterium sp. (strain ATCC BAA-1283 / AT1b).